A 535-amino-acid polypeptide reads, in one-letter code: MTDQTTRLPIRRALISVSDKTGVVDFARELVALGVEILSTGGTYKLLRDNGISAVEVADYTGFPEMMDGRVKTLHPKVHGGILGRRDLDGAVMEQHGIKPIDLVAVNLYPFEATVARPDCDLPTAIENIDIGGPTMVRSAAKNHKDVAIVVNAGDYAAVIESLKAGGLTYAQRFDLALKAFEHTSAYDGMIANYLGTIDQTRDTLGTADRGAFPRTFNSQFVKAQEMRYGENPHQSAAFYVEAKKGEASVSTAIQLQGKELSFNNVADTDAALECVKSFLKPACVIVKHANPCGVAVVPEDEGGIRKAYDLAYATDSESAFGGIIAFNRELDGETAKAIVERQFVEVIIAPKISAAAREVVAAKANVRLLECGEWPAERAPGWDFKRVNGGLLVQSRDIGMIKAEDLKIVTRRAPTEQEIHDLIFAWKVAKFVKSNAIVYARNRQTVGVGAGQMSRVNSARIAAIKAEHAGLEVKGAVMASDAFFPFRDGIDNAAKAGITAVIQPGGSMRDNEVIAAADEADIAMVFTGMRHFRH.

An MGS-like domain is found at 6–151 (TRLPIRRALI…KNHKDVAIVV (146 aa)).

The protein belongs to the PurH family.

It carries out the reaction (6R)-10-formyltetrahydrofolate + 5-amino-1-(5-phospho-beta-D-ribosyl)imidazole-4-carboxamide = 5-formamido-1-(5-phospho-D-ribosyl)imidazole-4-carboxamide + (6S)-5,6,7,8-tetrahydrofolate. The catalysed reaction is IMP + H2O = 5-formamido-1-(5-phospho-D-ribosyl)imidazole-4-carboxamide. It participates in purine metabolism; IMP biosynthesis via de novo pathway; 5-formamido-1-(5-phospho-D-ribosyl)imidazole-4-carboxamide from 5-amino-1-(5-phospho-D-ribosyl)imidazole-4-carboxamide (10-formyl THF route): step 1/1. It functions in the pathway purine metabolism; IMP biosynthesis via de novo pathway; IMP from 5-formamido-1-(5-phospho-D-ribosyl)imidazole-4-carboxamide: step 1/1. The polypeptide is Bifunctional purine biosynthesis protein PurH (Pseudomonas aeruginosa (strain LESB58)).